Reading from the N-terminus, the 216-residue chain is Ceramide-1-phosphate transfer protein (216 aa).

5 residues coordinate an N-acylsphingoid base 1-phosphate: D56, K60, R108, R112, and H152.

It belongs to the GLTP family.

It is found in the cytoplasm. Its subcellular location is the cytosol. The protein localises to the golgi apparatus. It localises to the trans-Golgi network membrane. The protein resides in the cell membrane. It is found in the endosome membrane. Its subcellular location is the nucleus outer membrane. The enzyme catalyses N-(hexadecanoyl)-sphing-4-enine-1-phosphate(in) = N-(hexadecanoyl)-sphing-4-enine-1-phosphate(out). It carries out the reaction N-(9Z-octadecenoyl)-sphing-4-enine-1-phosphate(in) = N-(9Z-octadecenoyl)-sphing-4-enine-1-phosphate(out). Functionally, mediates the intracellular transfer of ceramide-1-phosphate (C1P) between organelle membranes and the cell membrane. Required for normal structure of the Golgi stacks. Can bind phosphoceramides with a variety of aliphatic chains, but has a preference for lipids with saturated C16:0 or monounsaturated C18:1 aliphatic chains, and is inefficient with phosphoceramides containing lignoceryl (C24:0). Plays a role in the regulation of the cellular levels of ceramide-1-phosphate, and thereby contributes to the regulation of phospholipase PLA2G4A activity and the release of arachidonic acid. Has no activity with galactosylceramide, lactosylceramide, sphingomyelin, phosphatidylcholine, phosphatidic acid and ceramide. C1P transfer is stimulated by phosphatidylserine in C1P source vesicles. Regulates autophagy, inflammasome mediated IL1B and IL18 processing, and pyroptosis, but not apoptosis. This chain is Ceramide-1-phosphate transfer protein (Cptp), found in Rattus norvegicus (Rat).